The sequence spans 419 residues: BTB/POZ domain-containing protein KCTD20 (419 aa).

Residues 117–191 (EKVTLLVDGT…YKTGIINCPD (75 aa)) enclose the BTB domain.

In terms of assembly, interacts with AKT1; AKT2 and AKT3. Associates with PP2CA. Part of a complex containing MARK4.

The protein localises to the cytoplasm. Functionally, promotes the phosphorylation of AKT family members. This chain is BTB/POZ domain-containing protein KCTD20 (KCTD20), found in Homo sapiens (Human).